Consider the following 742-residue polypeptide: Photosystem I P700 chlorophyll a apoprotein A2 (742 aa).

8 helical membrane-spanning segments follow: residues 46–69, 135–158, 175–199, 273–291, 336–359, 375–401, 423–445, and 525–543; these read LFST…FHIA, LFQG…LHLQ, LNHH…HVAI, IAHH…GHMY, LHFQ…QHMG, SALY…IFFV, ALIS…IYVH, and FLVH…LILI. 2 residues coordinate [4Fe-4S] cluster: Cys567 and Cys576. Helical transmembrane passes span 583–604 and 651–673; these read ATYL…YWHW and LSPW…MFLI. Residues His662, Met670, and Tyr678 each contribute to the divinyl chlorophyll a site. Trp679 is a phylloquinone binding site. The helical transmembrane segment at 715–735 threads the bilayer; sequence LVGLTHFTVGNFVTFGAFVIA.

Belongs to the PsaA/PsaB family. In terms of assembly, the PsaA/B heterodimer binds the P700 divinyl chlorophyll special pair and subsequent electron acceptors. PSI consists of a core antenna complex that captures photons, and an electron transfer chain that converts photonic excitation into a charge separation. The cyanobacterial PSI reaction center is composed of one copy each of PsaA,B,C,D,E,F,I,J,K,L,M and X, and forms trimeric complexes. The cofactor is PSI electron transfer chain: 5 divinyl chlorophyll a, 1 divinyl chlorophyll a', 2 phylloquinones and 3 4Fe-4S clusters. PSI core antenna: 90 divinyl chlorophyll a, 22 carotenoids, 3 phospholipids and 1 galactolipid. P700 is a divinyl chlorophyll a/divinyl chlorophyll a' dimer, A0 is one or more divinyl chlorophyll a, A1 is one or both phylloquinones and FX is a shared 4Fe-4S iron-sulfur center..

It is found in the cellular thylakoid membrane. It catalyses the reaction reduced [plastocyanin] + hnu + oxidized [2Fe-2S]-[ferredoxin] = oxidized [plastocyanin] + reduced [2Fe-2S]-[ferredoxin]. In terms of biological role, psaA and PsaB bind P700, the primary electron donor of photosystem I (PSI), as well as the electron acceptors A0, A1 and FX. PSI is a plastocyanin/cytochrome c6-ferredoxin oxidoreductase, converting photonic excitation into a charge separation, which transfers an electron from the donor P700 chlorophyll pair to the spectroscopically characterized acceptors A0, A1, FX, FA and FB in turn. Oxidized P700 is reduced on the lumenal side of the thylakoid membrane by plastocyanin or cytochrome c6. In Prochlorococcus marinus (strain NATL2A), this protein is Photosystem I P700 chlorophyll a apoprotein A2.